The primary structure comprises 353 residues: Aromatic amino acid aminotransferase (353 aa).

Lysine 217 carries the N6-(pyridoxal phosphate)lysine modification.

This sequence belongs to the class-II pyridoxal-phosphate-dependent aminotransferase family. Homodimer. Pyridoxal 5'-phosphate is required as a cofactor.

The enzyme catalyses an aromatic L-alpha-amino acid + 2-oxoglutarate = an aromatic oxo-acid + L-glutamate. Aminotransferase that catalyzes the conversion of aromatic amino acids and 2-oxoglutarate into corresponding aromatic oxo acids and L-glutamate. This is Aromatic amino acid aminotransferase from Mycobacterium tuberculosis (strain ATCC 25177 / H37Ra).